A 102-amino-acid chain; its full sequence is NADH-quinone oxidoreductase subunit K (102 aa).

A run of 3 helical transmembrane segments spans residues 4 to 24 (IPME…LVGL), 30 to 50 (MLFV…AFIV), and 62 to 82 (VMFL…LALL).

This sequence belongs to the complex I subunit 4L family. In terms of assembly, NDH-1 is composed of 14 different subunits. Subunits NuoA, H, J, K, L, M, N constitute the membrane sector of the complex.

It is found in the cell inner membrane. The catalysed reaction is a quinone + NADH + 5 H(+)(in) = a quinol + NAD(+) + 4 H(+)(out). Its function is as follows. NDH-1 shuttles electrons from NADH, via FMN and iron-sulfur (Fe-S) centers, to quinones in the respiratory chain. The immediate electron acceptor for the enzyme in this species is believed to be ubiquinone. Couples the redox reaction to proton translocation (for every two electrons transferred, four hydrogen ions are translocated across the cytoplasmic membrane), and thus conserves the redox energy in a proton gradient. This chain is NADH-quinone oxidoreductase subunit K, found in Chromohalobacter salexigens (strain ATCC BAA-138 / DSM 3043 / CIP 106854 / NCIMB 13768 / 1H11).